The sequence spans 515 residues: Spermatogenesis-associated protein 2 (515 aa).

Residues 78–150 (ALHCAFSMLE…VYKLKELVES (73 aa)) form the PUB domain. The short motif at 321 to 338 (TYFSTQDDVDLYTDSEPR) is the PIM motif element. A disordered region spans residues 429-452 (GHQTQGLDRLAPVHSKPKPSTTAT).

Belongs to the SPATA2 family. As to quaternary structure, interacts (via the PIM motif) with RNF31/HOIP (via the PUB domain); the interaction is direct. Interacts (via the PUB domain) with CYLD; the interaction is direct. As to expression, widely expressed, with highest expression in testis, lung and intestine, and lower expression in brain, heart and spleen. Present at high level in Sertoli cells: expressed from stage I to stage XII of the testis seminiferous epithelium (at protein level).

It localises to the cytoplasm. The protein localises to the nucleus. Its function is as follows. Bridging factor that mediates the recruitment of CYLD to the LUBAC complex, thereby regulating TNF-alpha-induced necroptosis. Acts as a direct binding intermediate that bridges RNF31/HOIP, the catalytic subunit of the LUBAC complex, and the deubiquitinase (CYLD), thereby recruiting CYLD to the TNF-R1 signaling complex (TNF-RSC). Required to activate the 'Met-1'- (linear) and 'Lys-63'-linked deubiquitinase activities of CYLD. Controls the kinase activity of RIPK1 and TNF-alpha-induced necroptosis by promoting 'Met-1'-linked deubiquitination of RIPK1 by CYLD. The sequence is that of Spermatogenesis-associated protein 2 from Mus musculus (Mouse).